A 360-amino-acid polypeptide reads, in one-letter code: DNA replication and repair protein RecF (360 aa).

ATP is bound at residue G30–T37.

The protein belongs to the RecF family.

The protein resides in the cytoplasm. Functionally, the RecF protein is involved in DNA metabolism; it is required for DNA replication and normal SOS inducibility. RecF binds preferentially to single-stranded, linear DNA. It also seems to bind ATP. The polypeptide is DNA replication and repair protein RecF (Shewanella sediminis (strain HAW-EB3)).